The following is a 229-amino-acid chain: Translin (229 aa).

The interval 86-90 (RFHEH) is DNA/RNA binding. The segment at 177–198 (LDSGFRLLNLKNDSLRKRYDGL) is leucine-zipper.

Belongs to the translin family. As to quaternary structure, ring-shaped heterooctamer of six TSN and two TSNAX subunits, DNA/RNA binding occurs inside the ring.

It is found in the cytoplasm. The protein resides in the nucleus. Functionally, exhibits both single-stranded and double-stranded endoribonuclease activity. May act as an activator of RNA-induced silencing complex (RISC) by facilitating endonucleolytic cleavage of the siRNA passenger strand. Its function is as follows. DNA-binding protein that specifically recognizes consensus sequences at the breakpoint junctions in chromosomal translocations, mostly involving immunoglobulin (Ig)/T-cell receptor gene segments. Seems to recognize single-stranded DNA ends generated by staggered breaks occurring at recombination hot spots. The chain is Translin (TSN) from Gallus gallus (Chicken).